Here is a 157-residue protein sequence, read N- to C-terminus: Small ribosomal subunit protein uS7 (157 aa).

The protein belongs to the universal ribosomal protein uS7 family. In terms of assembly, part of the 30S ribosomal subunit. Contacts proteins S9 and S11.

Functionally, one of the primary rRNA binding proteins, it binds directly to 16S rRNA where it nucleates assembly of the head domain of the 30S subunit. Is located at the subunit interface close to the decoding center, probably blocks exit of the E-site tRNA. The polypeptide is Small ribosomal subunit protein uS7 (Chlamydia trachomatis serovar L2 (strain ATCC VR-902B / DSM 19102 / 434/Bu)).